The chain runs to 145 residues: Large ribosomal subunit protein mL43 (145 aa).

This sequence belongs to the mitochondrion-specific ribosomal protein mL43 family. Component of the mitochondrial large ribosomal subunit (mt-LSU). Mature yeast 74S mitochondrial ribosomes consist of a small (37S) and a large (54S) subunit. The 37S small subunit contains a 15S ribosomal RNA (15S mt-rRNA) and at least 32 different proteins. The 54S large subunit contains a 21S rRNA (21S mt-rRNA) and at least 45 different proteins.

The protein localises to the mitochondrion. Component of the mitochondrial ribosome (mitoribosome), a dedicated translation machinery responsible for the synthesis of mitochondrial genome-encoded proteins, including at least some of the essential transmembrane subunits of the mitochondrial respiratory chain. The mitoribosomes are attached to the mitochondrial inner membrane and translation products are cotranslationally integrated into the membrane. Also has an extraribosomal function, being essential for mitochondrial genome integrity. May interact with MHR1 to take part in the mtDNA repair mechanism. This Schizosaccharomyces pombe (strain 972 / ATCC 24843) (Fission yeast) protein is Large ribosomal subunit protein mL43 (mrpl51).